Reading from the N-terminus, the 454-residue chain is Mogroside I-E synthase (454 aa).

The active-site Proton acceptor is H18. H18 provides a ligand contact to an anthocyanidin. D111 functions as the Charge relay in the catalytic mechanism. H144 serves as a coordination point for an anthocyanidin. Cysteines 259 and 331 form a disulfide. Residues S278, C331, Q333, W351, N352, S353, and E356 each coordinate UDP-alpha-D-glucose. Residue A371 coordinates an anthocyanidin. Positions 372 and 373 each coordinate UDP-alpha-D-glucose.

It belongs to the UDP-glycosyltransferase family. As to expression, highly expressed in young fruits 15 days after anthesis (15-DAA).

It carries out the reaction mogrol + UDP-alpha-D-glucose = mogroside IE + UDP + H(+). It functions in the pathway secondary metabolite biosynthesis; terpenoid biosynthesis. With respect to regulation, activity is increased by Mg(2+). Its function is as follows. UDP-glycosyltransferase involved in the biosynthesis of cucurbitacin and mogroside tetracyclic triterpene natural products (e.g. siamenoside I and mogrosides IV, V and VI). Cucurbitacins have cytotoxic properties and exhibit deterrent taste as a defense barrier against herbivores. Mogrosides are nonsugar highly oxygenated compounds used as high-intensity zero-calorie sweeteners; they also possess pharmacological properties such as regulating immunity, lowering blood sugar and lipid levels, protecting the liver, and acting as antioxidants and antitumor agents. Catalyzes the transfer of a glucose moiety to the C-3 hydroxyl of mogrol to form mogroside I-E. Besides mogrol, UGT74AC1 also shows activity in vitro with quercetin and naringenin as substrate. The sequence is that of Mogroside I-E synthase from Siraitia grosvenorii (Monk's fruit).